The sequence spans 367 residues: Alanine racemase (367 aa).

Lysine 40 functions as the Proton acceptor; specific for D-alanine in the catalytic mechanism. Lysine 40 carries the N6-(pyridoxal phosphate)lysine modification. Arginine 136 lines the substrate pocket. Residue tyrosine 263 is the Proton acceptor; specific for L-alanine of the active site. Residue methionine 310 coordinates substrate.

Belongs to the alanine racemase family. Requires pyridoxal 5'-phosphate as cofactor.

The enzyme catalyses L-alanine = D-alanine. It participates in amino-acid biosynthesis; D-alanine biosynthesis; D-alanine from L-alanine: step 1/1. Catalyzes the interconversion of L-alanine and D-alanine. May also act on other amino acids. The chain is Alanine racemase (alr) from Streptococcus pneumoniae (strain 70585).